Here is a 179-residue protein sequence, read N- to C-terminus: Large ribosomal subunit protein uL5 (179 aa).

Belongs to the universal ribosomal protein uL5 family. In terms of assembly, part of the 50S ribosomal subunit; part of the 5S rRNA/L5/L18/L25 subcomplex. Contacts the 5S rRNA and the P site tRNA. Forms a bridge to the 30S subunit in the 70S ribosome.

This is one of the proteins that bind and probably mediate the attachment of the 5S RNA into the large ribosomal subunit, where it forms part of the central protuberance. In the 70S ribosome it contacts protein S13 of the 30S subunit (bridge B1b), connecting the 2 subunits; this bridge is implicated in subunit movement. Contacts the P site tRNA; the 5S rRNA and some of its associated proteins might help stabilize positioning of ribosome-bound tRNAs. This Geobacillus kaustophilus (strain HTA426) protein is Large ribosomal subunit protein uL5.